A 756-amino-acid chain; its full sequence is U3 small nucleolar RNA-associated protein 25 homolog (756 aa).

Residues 1 to 159 are disordered; that stretch reads MGKRGSRSQS…SQTSPEEFTD (159 aa). Promotes p53/TP53 degradation regions lie at residues 1 to 185 and 573 to 635; these read MGKR…SLKA and VQLP…KKEE. S10 carries the post-translational modification Phosphoserine. Over residues 25-43 the composition is skewed to basic and acidic residues; sequence RDFGEEHPFYDRVSRKEAK. Residues S50, S52, S58, S60, S62, and S64 each carry the phosphoserine modification. Composition is skewed to acidic residues over residues 54–64 and 84–121; these read DSSDSESDSES and EEEE…EEMA. Positions 636 to 697 are represses p53/TP53 degradation; the sequence is LNFTHICEYT…YELPTYPHFY (62 aa).

Belongs to the UTP25 family. As to quaternary structure, interacts with CAPN3; the interaction is required for CAPN3 translocation to the nucleolus. In terms of processing, phosphorylated. Phosphorylation is required to promote p53/TP53 degradation in the nucleolus which promotes cell cycle progression and liver development. As to expression, expressed in colon.

Its subcellular location is the nucleus. The protein localises to the nucleolus. Component of the ribosomal small subunit processome for the biogenesis of ribosomes, functions in pre-ribosomal RNA (pre-rRNA) processing. Essential for embryonic development in part through the regulation of p53 pathway. Controls the expansion growth of digestive organs and liver. Also involved in the sympathetic neuronal development. Mediates, with CAPN3, the proteasome-independent degradation of p53/TP53. This chain is U3 small nucleolar RNA-associated protein 25 homolog, found in Homo sapiens (Human).